Reading from the N-terminus, the 612-residue chain is BTB/POZ domain-containing protein 9 (612 aa).

Residues 36 to 104 (GDVTFVVEKK…IYTGRATLTD (69 aa)) form the BTB domain. The 99-residue stretch at 142 to 240 (VCMTFDVASL…SLTELLNVVR (99 aa)) folds into the BACK domain. The interval 559–612 (QQSNQKEDSSEEPGTGDPSTPNQQLDPHAPRAPSASSLPPSPGPNSRSPNQQNQ) is disordered. Low complexity predominate over residues 589 to 612 (RAPSASSLPPSPGPNSRSPNQQNQ).

As to expression, expressed in the brain (at protein level).

The protein is BTB/POZ domain-containing protein 9 (Btbd9) of Mus musculus (Mouse).